We begin with the raw amino-acid sequence, 439 residues long: Ribosomal protein uS12 methylthiotransferase RimO (439 aa).

Positions 4–114 (PKVGFVSLGR…VVRAVHGVAP (111 aa)) constitute an MTTase N-terminal domain. In terms of domain architecture, Radical SAM core spans 133–370 (LTPRHYAYLK…MEHQQAISTA (238 aa)). 3 residues coordinate [4Fe-4S] cluster: Cys-147, Cys-151, and Cys-154. The TRAM domain maps to 373-439 (STRVGREIDV…EYDLWGERIA (67 aa)).

This sequence belongs to the methylthiotransferase family. RimO subfamily. The cofactor is [4Fe-4S] cluster.

The protein localises to the cytoplasm. The catalysed reaction is L-aspartate(89)-[ribosomal protein uS12]-hydrogen + (sulfur carrier)-SH + AH2 + 2 S-adenosyl-L-methionine = 3-methylsulfanyl-L-aspartate(89)-[ribosomal protein uS12]-hydrogen + (sulfur carrier)-H + 5'-deoxyadenosine + L-methionine + A + S-adenosyl-L-homocysteine + 2 H(+). Its function is as follows. Catalyzes the methylthiolation of an aspartic acid residue of ribosomal protein uS12. This is Ribosomal protein uS12 methylthiotransferase RimO from Bordetella bronchiseptica (strain ATCC BAA-588 / NCTC 13252 / RB50) (Alcaligenes bronchisepticus).